A 145-amino-acid polypeptide reads, in one-letter code: UPF0179 protein TV1250 (145 aa).

It belongs to the UPF0179 family.

This Thermoplasma volcanium (strain ATCC 51530 / DSM 4299 / JCM 9571 / NBRC 15438 / GSS1) protein is UPF0179 protein TV1250.